Here is a 187-residue protein sequence, read N- to C-terminus: Peptidyl-tRNA hydrolase (187 aa).

Residue Phe14 participates in tRNA binding. His19 serves as the catalytic Proton acceptor. Tyr64, Asn66, and Asn112 together coordinate tRNA.

This sequence belongs to the PTH family. In terms of assembly, monomer.

It localises to the cytoplasm. The enzyme catalyses an N-acyl-L-alpha-aminoacyl-tRNA + H2O = an N-acyl-L-amino acid + a tRNA + H(+). Its function is as follows. Hydrolyzes ribosome-free peptidyl-tRNAs (with 1 or more amino acids incorporated), which drop off the ribosome during protein synthesis, or as a result of ribosome stalling. In terms of biological role, catalyzes the release of premature peptidyl moieties from peptidyl-tRNA molecules trapped in stalled 50S ribosomal subunits, and thus maintains levels of free tRNAs and 50S ribosomes. The protein is Peptidyl-tRNA hydrolase of Oceanobacillus iheyensis (strain DSM 14371 / CIP 107618 / JCM 11309 / KCTC 3954 / HTE831).